We begin with the raw amino-acid sequence, 144 residues long: Transcription antitermination protein NusB (144 aa).

Belongs to the NusB family.

Its function is as follows. Involved in transcription antitermination. Required for transcription of ribosomal RNA (rRNA) genes. Binds specifically to the boxA antiterminator sequence of the ribosomal RNA (rrn) operons. This chain is Transcription antitermination protein NusB, found in Haemophilus influenzae (strain 86-028NP).